We begin with the raw amino-acid sequence, 395 residues long: Beta-1,4-galactosyltransferase 3 (395 aa).

Topologically, residues methionine 1–cysteine 10 are cytoplasmic. A helical; Signal-anchor for type II membrane protein transmembrane segment spans residues threonine 11 to phenylalanine 31. The Lumenal segment spans residues arginine 32–histidine 395. A glycan (N-linked (GlcNAc...) asparagine) is linked at asparagine 57. Cysteine 79 and cysteine 121 are oxidised to a cystine. Proline 132–arginine 136 is a binding site for UDP-alpha-D-galactose. Asparagine 168 carries an N-linked (GlcNAc...) asparagine glycan. UDP-alpha-D-galactose contacts are provided by residues phenylalanine 171–arginine 173, valine 198–aspartate 199, tyrosine 228, and tryptophan 260. Cysteine 192 and cysteine 211 are disulfide-bonded. Residue aspartate 199 participates in Mn(2+) binding. Glycine 262–aspartate 265 contacts N-acetyl-D-glucosamine. Mn(2+) is bound at residue histidine 293. Residue histidine 293 to glycine 295 coordinates UDP-alpha-D-galactose. Arginine 305 provides a ligand contact to N-acetyl-D-glucosamine. An N-linked (GlcNAc...) asparagine glycan is attached at asparagine 339. The tract at residues isoleucine 340 to histidine 395 is disordered. Low complexity predominate over residues arginine 352–serine 364. Asparagine 387 carries N-linked (GlcNAc...) asparagine glycosylation.

Belongs to the glycosyltransferase 7 family. Mn(2+) serves as cofactor.

It is found in the golgi apparatus. The protein localises to the golgi stack membrane. The catalysed reaction is an N-acetyl-beta-D-glucosaminyl derivative + UDP-alpha-D-galactose = a beta-D-galactosyl-(1-&gt;4)-N-acetyl-beta-D-glucosaminyl derivative + UDP + H(+). It catalyses the reaction N-acetyl-D-glucosamine + UDP-alpha-D-galactose = beta-D-galactosyl-(1-&gt;4)-N-acetyl-D-glucosamine + UDP + H(+). The enzyme catalyses a beta-D-GlcNAc-(1-&gt;3)-beta-D-Gal-(1-&gt;4)-beta-D-Glc-(1&lt;-&gt;1)-Cer(d18:1(4E)) + UDP-alpha-D-galactose = a neolactoside nLc4Cer(d18:1(4E)) + UDP + H(+). It carries out the reaction a beta-D-glucosylceramide + UDP-alpha-D-galactose = a beta-D-galactosyl-(1-&gt;4)-beta-D-glucosyl-(1&lt;-&gt;1)-ceramide + UDP + H(+). The catalysed reaction is a neolactoside IV(3)-beta-GlcNAc-nLc4Cer + UDP-alpha-D-galactose = a neolactoside nLc6Cer + UDP + H(+). Its pathway is protein modification; protein glycosylation. In terms of biological role, responsible for the synthesis of complex-type N-linked oligosaccharides in many glycoproteins as well as the carbohydrate moieties of glycolipids. This chain is Beta-1,4-galactosyltransferase 3, found in Mus musculus (Mouse).